Consider the following 299-residue polypeptide: tRNA dimethylallyltransferase (299 aa).

13–20 is an ATP binding site; sequence GPTASGKT. Substrate is bound at residue 15 to 20; the sequence is TASGKT. The segment at 38–41 is interaction with substrate tRNA; that stretch reads DSRQ.

This sequence belongs to the IPP transferase family. In terms of assembly, monomer. Mg(2+) is required as a cofactor.

It catalyses the reaction adenosine(37) in tRNA + dimethylallyl diphosphate = N(6)-dimethylallyladenosine(37) in tRNA + diphosphate. Catalyzes the transfer of a dimethylallyl group onto the adenine at position 37 in tRNAs that read codons beginning with uridine, leading to the formation of N6-(dimethylallyl)adenosine (i(6)A). The protein is tRNA dimethylallyltransferase of Prochlorococcus marinus (strain MIT 9515).